A 210-amino-acid polypeptide reads, in one-letter code: 3-oxo-tetronate 4-phosphate decarboxylase (210 aa).

The active-site Proton acceptor is Glu74. Glu74, His93, and His95 together coordinate Zn(2+). Tyr120 (proton donor) is an active-site residue. His160 is a binding site for Zn(2+).

The protein belongs to the aldolase class II family. AraD/FucA subfamily. Zn(2+) serves as cofactor.

The catalysed reaction is 3-dehydro-4-O-phospho-D-erythronate + H(+) = dihydroxyacetone phosphate + CO2. It catalyses the reaction 3-dehydro-4-O-phospho-L-erythronate + H(+) = dihydroxyacetone phosphate + CO2. Its function is as follows. Catalyzes the decarboxylation of 3-oxo-tetronate 4-phosphate to dihydroxyacetone phosphate (DHAP) and CO(2). The chain is 3-oxo-tetronate 4-phosphate decarboxylase from Haemophilus influenzae (strain ATCC 51907 / DSM 11121 / KW20 / Rd).